The chain runs to 596 residues: Aspartate--tRNA(Asp/Asn) ligase (596 aa).

L-aspartate is bound at residue Glu-172. Residues 196–199 (QLFK) form an aspartate region. L-aspartate is bound at residue Arg-218. ATP-binding positions include 218–220 (RDE) and Gln-227. His-455 provides a ligand contact to L-aspartate. Glu-489 is an ATP binding site. Residue Arg-496 participates in L-aspartate binding. 541–544 (GLDR) is a binding site for ATP.

It belongs to the class-II aminoacyl-tRNA synthetase family. Type 1 subfamily. In terms of assembly, homodimer.

It localises to the cytoplasm. It carries out the reaction tRNA(Asx) + L-aspartate + ATP = L-aspartyl-tRNA(Asx) + AMP + diphosphate. Functionally, aspartyl-tRNA synthetase with relaxed tRNA specificity since it is able to aspartylate not only its cognate tRNA(Asp) but also tRNA(Asn). Reaction proceeds in two steps: L-aspartate is first activated by ATP to form Asp-AMP and then transferred to the acceptor end of tRNA(Asp/Asn). The protein is Aspartate--tRNA(Asp/Asn) ligase of Bordetella bronchiseptica (strain ATCC BAA-588 / NCTC 13252 / RB50) (Alcaligenes bronchisepticus).